The primary structure comprises 1163 residues: Zinc finger protein 516 (1163 aa).

A compositionally biased stretch (basic and acidic residues) spans 1-13 (MDRNREAEMELRR). The interval 1 to 26 (MDRNREAEMELRRGPSPTRAGRGHEV) is disordered. Positions 1 to 431 (MDRNREAEME…ATRGKVAEPA (431 aa)) are mediates promoter DNA-binding and activation of transcription. 7 C2H2-type zinc fingers span residues 34–56 (HTCCICGKSFPFQSSLSQHMRKH), 62–84 (YKCPYCDHRASQKGNLKIHIRSH), 174–197 (VQCSFCKSQFERKKDLELHVHQAH), 200–223 (FKCRLCSYATLREESLLSHIERDH), 248–270 (FPCEVCGQAFSQTWFLKAHMKKH), 276–298 (HGCHICGRRFKEPWFLKNHMKAH), and 335–357 (EVCAKCGNLFTNLDSLNAHNAIH). Basic and acidic residues predominate over residues 460 to 469 (SQEKRKREQD). Disordered stretches follow at residues 460 to 512 (SQEK…TGQG), 533 to 667 (HSRV…QEQH), and 679 to 730 (HPKQ…APDL). Residues 496–507 (RSAARPNRRAAA) show a composition bias toward low complexity. The C2H2-type 8 zinc finger occupies 515–537 (SECFECGKIFRTYHQMVLHSRVH). Residues 542–552 (RERDSDGDRAA) show a composition bias toward basic and acidic residues. A compositionally biased stretch (polar residues) spans 561-572 (EGDSASQPSSPG). Acidic residues predominate over residues 588-598 (EAAEDSGEEGA). A compositionally biased stretch (polar residues) spans 615-625 (EVTSTELSSGD). Residues 626–641 (QSHKMGDNASERDTGE) are compositionally biased toward basic and acidic residues. Residue K643 forms a Glycyl lysine isopeptide (Lys-Gly) (interchain with G-Cter in SUMO2) linkage. Residues 656-667 (SSRETSRRQEQH) are compositionally biased toward basic and acidic residues. Residue K681 forms a Glycyl lysine isopeptide (Lys-Gly) (interchain with G-Cter in SUMO2) linkage. Over residues 706 to 720 (PAEKLSDLHNKEHSG) the composition is skewed to basic and acidic residues. The C2H2-type 9; atypical zinc finger occupies 760–783 (HPCPYCSHKTYYPEVLWMHKRIWH). The tract at residues 838-1007 (TQVPGGMPGS…PPREPPSKAA (170 aa)) is disordered. Positions 840–857 (VPGGMPGSKSGSSPLGVV) are enriched in low complexity. Glycyl lysine isopeptide (Lys-Gly) (interchain with G-Cter in SUMO2) cross-links involve residues K1043 and K1062. The segment at 1098-1120 (FVCIECGKSFHQPGHLRAHMRAH) adopts a C2H2-type 10 zinc-finger fold. The interval 1126–1163 (SDGPRGSEVHTTSADAPKQGRDHSNTGTVQTVPLRKGT) is disordered.

Belongs to the krueppel C2H2-type zinc-finger protein family. In terms of assembly, interacts with PRDM16; the interaction is direct and may play a role in the transcription of brown adipose tissue-specific genes. Interacts with PWWP2B. Interacts with HDAC1; this interaction is enhanced in the presence of PWWP2B.

It is found in the nucleus. Its function is as follows. Transcriptional regulator that binds to the promoter and activates the transcription of genes promoting brown adipose tissue (BAT) differentiation. Among brown adipose tissue-specific genes, binds the proximal region of the promoter of the UCP1 gene to activate its transcription and thereby regulate thermogenesis. May also play a role in the cellular response to replication stress. This chain is Zinc finger protein 516, found in Homo sapiens (Human).